The following is a 173-amino-acid chain: Translation initiation factor IF-3 (173 aa).

Belongs to the IF-3 family. Monomer.

It localises to the cytoplasm. Functionally, IF-3 binds to the 30S ribosomal subunit and shifts the equilibrium between 70S ribosomes and their 50S and 30S subunits in favor of the free subunits, thus enhancing the availability of 30S subunits on which protein synthesis initiation begins. This is Translation initiation factor IF-3 from Campylobacter lari (strain RM2100 / D67 / ATCC BAA-1060).